Reading from the N-terminus, the 568-residue chain is MSHQHTVPVTVPAVVQESLKTVCSPAQTQQEQTKQPTPYPAQCQVFTDTQEKGFPKHEEKEANPVKDLPEQESEHHQQPGPQKQQLQVKKPEQELQEQELHSEKQPQEPQGLLCLGQQQQREPQEQEQHLRQHQQPQQESQGQGLCLGQQQDVLAPQELHMGQHQKEKLQEPELPLGQQQKTPEEQELILGEKQQKLHLVERHQEPQEQELHHGQKQKQQQPQEQELQLVQHQKQKQHEPELCLRKQQQQESHERELHLGKQQQQESHEPELHLGKQQHQESHEPELHLGKQQHQESCEPELHLGEQQHQEQQQHQESCEPELHLGKQQHQETQESELQLGKQQKPHEPDMVLDPKEKQKLHDPELHLGKQQHQESQESELQVEKKQHEKSPEPELHLGKQQELHEPDMTEDQKEKQSLHEPELHLGKQQESHEPDMTEDQKEKQSLYEPELHLGKQQEQQIEYEGYQRSKSLNQLLKQEKASRGQELDDSHLEQEKELLDQRLDQELVNKDEQLERKKHKLENLTQKEKQIKQLVPSTDRVQETQPIQPVKEDSLTTKKQQHSHEVQ.

Disordered regions lie at residues 23–499 (CSPA…EKEL) and 517–568 (RKKH…HEVQ). Over residues 25–36 (PAQTQQEQTKQP) the composition is skewed to low complexity. A compositionally biased stretch (basic and acidic residues) spans 49–77 (TQEKGFPKHEEKEANPVKDLPEQESEHHQ). A compositionally biased stretch (low complexity) spans 78 to 88 (QPGPQKQQLQV). The segment covering 89 to 106 (KKPEQELQEQELHSEKQP) has biased composition (basic and acidic residues). Low complexity-rich tracts occupy residues 107–121 (QEPQGLLCLGQQQQR), 133–154 (HQQPQQESQGQGLCLGQQQDVL), and 172–181 (PELPLGQQQK). Basic and acidic residues predominate over residues 193 to 213 (KQQKLHLVERHQEPQEQELHH). Low complexity predominate over residues 217–232 (QKQQQPQEQELQLVQH). 2 stretches are compositionally biased toward basic and acidic residues: residues 266-333 (ESHE…HQET) and 345-456 (KPHE…HLGK). Low complexity predominate over residues 457-467 (QQEQQIEYEGY). The residue at position 472 (S472) is a Phosphoserine. 3 stretches are compositionally biased toward basic and acidic residues: residues 478 to 499 (KQEKASRGQELDDSHLEQEKEL), 517 to 532 (RKKHKLENLTQKEKQI), and 551 to 568 (VKEDSLTTKKQQHSHEVQ).

It belongs to the involucrin family. As to quaternary structure, directly or indirectly cross-linked to cornifelin (CNFN). Post-translationally, substrate of transglutaminase. Specific glutamines or lysines are cross-linked to keratins, desmoplakin and to inter involucrin molecules. In terms of tissue distribution, keratinocytes of epidermis and other stratified squamous epithelia.

Its subcellular location is the cytoplasm. Part of the insoluble cornified cell envelope (CE) of stratified squamous epithelia. The protein is Involucrin (Ivl) of Rattus norvegicus (Rat).